Here is a 600-residue protein sequence, read N- to C-terminus: Integrator complex subunit 11 (600 aa).

Positions 68, 70, 72, 73, 157, and 178 each coordinate Zn(2+). The short motif at 68–73 is the HXHXDH motif element; that stretch reads HFHLDH. Glu203 is an active-site residue. A Zn(2+)-binding site is contributed by His414. Positions 469 to 479 match the Nuclear localization signal motif; that stretch reads LLPDAKKPKLM.

It belongs to the metallo-beta-lactamase superfamily. RNA-metabolizing metallo-beta-lactamase-like family. INTS11 subfamily. As to quaternary structure, component of the Integrator complex, composed of core subunits INTS1, INTS2, INTS3, INTS4, INTS5, INTS6, INTS7, INTS8, INTS9/RC74, INTS10, INTS11/CPSF3L, INTS12, INTS13, INTS14 and INTS15. The core complex associates with protein phosphatase 2A subunits PPP2CA and PPP2R1A, to form the Integrator-PP2A (INTAC) complex. INTS11 is part of the RNA endonuclease subcomplex, composed of INTS4, INTS9, INTS11 and inositol hexakisphosphate (InsP6). The cofactor is Zn(2+).

It localises to the nucleus. Its subcellular location is the cytoplasm. In terms of biological role, RNA endonuclease component of the integrator complex, a multiprotein complex that terminates RNA polymerase II (Pol II) transcription in the promoter-proximal region of genes. The integrator complex provides a quality checkpoint during transcription elongation by driving premature transcription termination of transcripts that are unfavorably configured for transcriptional elongation: the complex terminates transcription by (1) catalyzing dephosphorylation of the C-terminal domain (CTD) of Pol II subunit POLR2A/RPB1 and SUPT5H/SPT5, (2) degrading the exiting nascent RNA transcript via endonuclease activity and (3) promoting the release of Pol II from bound DNA. The integrator complex is also involved in terminating the synthesis of non-coding Pol II transcripts, such as enhancer RNAs (eRNAs), small nuclear RNAs (snRNAs), telomerase RNAs and long non-coding RNAs (lncRNAs). Within the integrator complex, INTS11 constitutes the RNA endonuclease subunit that degrades exiting nascent RNA transcripts. The sequence is that of Integrator complex subunit 11 (INTS11) from Gallus gallus (Chicken).